We begin with the raw amino-acid sequence, 953 residues long: Mannosylglycoprotein endo-beta-mannosidase (953 aa).

The Proton donor role is filled by glutamate 461. Glutamate 553 acts as the Nucleophile in catalysis.

The protein belongs to the glycosyl hydrolase 2 family. As to quaternary structure, heterotrimer of 31 kDa, 28 kDa and 42 kDa subunits. Post-translationally, the mature enzyme is proteotically cleaved into 3 subunits of 31 kDa, 28 kDa and 42 kDa. Ubiquitously expressed.

The enzyme catalyses Hydrolysis of the alpha-D-mannosyl-(1-&gt;6)-beta-D-mannosyl-(1-&gt;4)-N-acetyl-beta-D-glucosaminyl-(1-&gt;4)-N-acetyl-beta-D-glucosaminyl sequence of glycoprotein to alpha-D-mannosyl-(1-&gt;6)-D-mannose and N-acetyl-beta-D-glucosaminyl-(1-&gt;4)-N-acetyl-beta-D-glucosaminyl sequences.. Functionally, glycosidase that specifically hydrolyzes the Man-beta-1,4-GlcNAc linkage in the trimannosyl core structure of N-glycans. Does not hydrolyzes pyridylamino derivatives sugar chains containing Man-alpha-1,3-Man-beta or Xylose-beta-1,2-Man-beta. The sequence is that of Mannosylglycoprotein endo-beta-mannosidase (EBM) from Lilium longiflorum (Trumpet lily).